The sequence spans 160 residues: Small ribosomal subunit protein uS7B (160 aa).

This sequence belongs to the universal ribosomal protein uS7 family. As to quaternary structure, part of the 30S ribosomal subunit. Contacts proteins S9 and S11.

One of the primary rRNA binding proteins, it binds directly to 16S rRNA where it nucleates assembly of the head domain of the 30S subunit. Is located at the subunit interface close to the decoding center, probably blocks exit of the E-site tRNA. The protein is Small ribosomal subunit protein uS7B of Aquifex aeolicus (strain VF5).